A 249-amino-acid polypeptide reads, in one-letter code: MKFYKYCASGNDFVITNADRKEDRSSLAKELCNRYEGIGADGFIVILPHEKYDFEWEFYNNDGSRAAMCGNGSRAAAHFAHHINKINPSMIFLTGAGVIKAKVNQDKVEVSLGKIKSVQNTFEKLGKTWQLCDTGVPHLVHFCQSLDEFDTMLCQKMRQKYNANVNFVKILDENHLKVRTYERGVEDETLACGTGMGACFYLAFLNKKVQNKVKITPKSGEEMGFAYKNEELFFEGKVKYCFEANYNFS.

Substrate-binding residues include Asn-11 and Asn-60. Cys-69 functions as the Proton donor in the catalytic mechanism. Residues 70-71 (GN), Asn-164, and 182-183 (ER) contribute to the substrate site. The active-site Proton acceptor is Cys-192. 193–194 (GT) contacts substrate.

This sequence belongs to the diaminopimelate epimerase family. Homodimer.

Its subcellular location is the cytoplasm. The catalysed reaction is (2S,6S)-2,6-diaminopimelate = meso-2,6-diaminopimelate. Its pathway is amino-acid biosynthesis; L-lysine biosynthesis via DAP pathway; DL-2,6-diaminopimelate from LL-2,6-diaminopimelate: step 1/1. In terms of biological role, catalyzes the stereoinversion of LL-2,6-diaminopimelate (L,L-DAP) to meso-diaminopimelate (meso-DAP), a precursor of L-lysine and an essential component of the bacterial peptidoglycan. This Campylobacter jejuni subsp. doylei (strain ATCC BAA-1458 / RM4099 / 269.97) protein is Diaminopimelate epimerase.